A 103-amino-acid polypeptide reads, in one-letter code: Large ribosomal subunit protein bL21 (103 aa).

It belongs to the bacterial ribosomal protein bL21 family. Part of the 50S ribosomal subunit. Contacts protein L20.

In terms of biological role, this protein binds to 23S rRNA in the presence of protein L20. This is Large ribosomal subunit protein bL21 from Aromatoleum aromaticum (strain DSM 19018 / LMG 30748 / EbN1) (Azoarcus sp. (strain EbN1)).